The sequence spans 304 residues: Non-specific ribonucleoside hydrolase RihC (304 aa).

The active site involves His233.

Belongs to the IUNH family. RihC subfamily.

In terms of biological role, hydrolyzes both purine and pyrimidine ribonucleosides with a broad-substrate specificity. This chain is Non-specific ribonucleoside hydrolase RihC, found in Escherichia coli O8 (strain IAI1).